Consider the following 744-residue polypeptide: Catalase-peroxidase (744 aa).

Residues Trp108 to Tyr231 constitute a cross-link (tryptophyl-tyrosyl-methioninium (Trp-Tyr) (with M-257)). Catalysis depends on His109, which acts as the Proton acceptor. Positions Tyr231 to Met257 form a cross-link, tryptophyl-tyrosyl-methioninium (Tyr-Met) (with W-108). Residue His272 coordinates heme b. A disordered region spans residues Ala353–Asp372.

The protein belongs to the peroxidase family. Peroxidase/catalase subfamily. In terms of assembly, homodimer or homotetramer. Heme b is required as a cofactor. In terms of processing, formation of the three residue Trp-Tyr-Met cross-link is important for the catalase, but not the peroxidase activity of the enzyme.

The catalysed reaction is H2O2 + AH2 = A + 2 H2O. It carries out the reaction 2 H2O2 = O2 + 2 H2O. Its function is as follows. Bifunctional enzyme with both catalase and broad-spectrum peroxidase activity. This Frankia casuarinae (strain DSM 45818 / CECT 9043 / HFP020203 / CcI3) protein is Catalase-peroxidase.